The sequence spans 141 residues: Large ribosomal subunit protein uL11 (141 aa).

The protein belongs to the universal ribosomal protein uL11 family. Part of the ribosomal stalk of the 50S ribosomal subunit. Interacts with L10 and the large rRNA to form the base of the stalk. L10 forms an elongated spine to which L12 dimers bind in a sequential fashion forming a multimeric L10(L12)X complex. Post-translationally, one or more lysine residues are methylated.

In terms of biological role, forms part of the ribosomal stalk which helps the ribosome interact with GTP-bound translation factors. This chain is Large ribosomal subunit protein uL11, found in Chlorobium phaeobacteroides (strain BS1).